The following is a 97-amino-acid chain: Protein YcgL (97 aa).

A YcgL domain is found at Met1–Leu85.

The polypeptide is Protein YcgL (Escherichia fergusonii (strain ATCC 35469 / DSM 13698 / CCUG 18766 / IAM 14443 / JCM 21226 / LMG 7866 / NBRC 102419 / NCTC 12128 / CDC 0568-73)).